A 1192-amino-acid chain; its full sequence is Pyruvate carboxylase (1192 aa).

The segment at 1–23 is disordered; sequence MAAPRQPEEAVDDTEFIDDHHDQ. A Biotin carboxylation domain is found at 40-492; sequence QFQKILVANR…WTTFIDDTPE (453 aa). ATP is bound by residues Lys-158, Glu-242, and His-277. One can recognise an ATP-grasp domain in the interval 162–359; sequence RQLAIRCDVP…IVAAQIQIAA (198 aa). Arg-334 is a catalytic residue. The 269-residue stretch at 578 to 846 folds into the Pyruvate carboxyltransferase domain; that stretch reads CLIMDTTWRD…DPGLNSAQVR (269 aa). Substrate-binding positions include 586–590 and Arg-659; that span reads RDAHQ. An a divalent metal cation-binding site is contributed by Asp-587. A divalent metal cation contacts are provided by Lys-755, His-785, and His-787. Lys-755 carries the N6-carboxylysine modification. Thr-920 serves as a coordination point for substrate. Residues 1115–1190 enclose the Biotinyl-binding domain; that stretch reads KAELGDSSQV…DGQDLVCKIV (76 aa). N6-biotinyllysine is present on Lys-1156.

Requires biotin as cofactor. The cofactor is Zn(2+).

It is found in the cytoplasm. The enzyme catalyses hydrogencarbonate + pyruvate + ATP = oxaloacetate + ADP + phosphate + H(+). Its pathway is carbohydrate biosynthesis; gluconeogenesis. Its function is as follows. Pyruvate carboxylase catalyzes a 2-step reaction, involving the ATP-dependent carboxylation of the covalently attached biotin in the first step and the transfer of the carboxyl group to pyruvate in the second. This is Pyruvate carboxylase (pyc) from Aspergillus niger.